Here is a 547-residue protein sequence, read N- to C-terminus: Phosphomethylpyrimidine synthase (547 aa).

Residues 1–15 (MTETLSKTTEPSVTT) show a composition bias toward polar residues. A disordered region spans residues 1 to 36 (MTETLSKTTEPSVTTGPIPGSSKAYREVANPDGGPS). Substrate contacts are provided by residues asparagine 150, methionine 179, tyrosine 208, histidine 244, 264-266 (SRG), 305-308 (DGLR), and glutamate 344. Position 348 (histidine 348) interacts with Zn(2+). Tyrosine 371 provides a ligand contact to substrate. A Zn(2+)-binding site is contributed by histidine 412. [4Fe-4S] cluster contacts are provided by cysteine 492, cysteine 495, and cysteine 500.

Belongs to the ThiC family. [4Fe-4S] cluster is required as a cofactor.

The catalysed reaction is 5-amino-1-(5-phospho-beta-D-ribosyl)imidazole + S-adenosyl-L-methionine = 4-amino-2-methyl-5-(phosphooxymethyl)pyrimidine + CO + 5'-deoxyadenosine + formate + L-methionine + 3 H(+). It functions in the pathway cofactor biosynthesis; thiamine diphosphate biosynthesis. Catalyzes the synthesis of the hydroxymethylpyrimidine phosphate (HMP-P) moiety of thiamine from aminoimidazole ribotide (AIR) in a radical S-adenosyl-L-methionine (SAM)-dependent reaction. This chain is Phosphomethylpyrimidine synthase, found in Mycobacterium leprae (strain Br4923).